The following is a 351-amino-acid chain: DNA polymerase IV (351 aa).

The 182-residue stretch at 4 to 185 (IIHVDMDCFF…LPLAKIPGVG (182 aa)) folds into the UmuC domain. Aspartate 8 and aspartate 103 together coordinate Mg(2+). Glutamate 104 is a catalytic residue.

This sequence belongs to the DNA polymerase type-Y family. As to quaternary structure, monomer. Requires Mg(2+) as cofactor.

The protein localises to the cytoplasm. The enzyme catalyses DNA(n) + a 2'-deoxyribonucleoside 5'-triphosphate = DNA(n+1) + diphosphate. Poorly processive, error-prone DNA polymerase involved in untargeted mutagenesis. Copies undamaged DNA at stalled replication forks, which arise in vivo from mismatched or misaligned primer ends. These misaligned primers can be extended by PolIV. Exhibits no 3'-5' exonuclease (proofreading) activity. May be involved in translesional synthesis, in conjunction with the beta clamp from PolIII. The polypeptide is DNA polymerase IV (Salmonella choleraesuis (strain SC-B67)).